The sequence spans 156 residues: Small ribosomal subunit protein uS7 (156 aa).

The protein belongs to the universal ribosomal protein uS7 family. In terms of assembly, part of the 30S ribosomal subunit. Contacts proteins S9 and S11.

One of the primary rRNA binding proteins, it binds directly to 16S rRNA where it nucleates assembly of the head domain of the 30S subunit. Is located at the subunit interface close to the decoding center, probably blocks exit of the E-site tRNA. The chain is Small ribosomal subunit protein uS7 from Jannaschia sp. (strain CCS1).